The chain runs to 1307 residues: Cellulose synthase 2 operon protein C (1307 aa).

Residues 1 to 55 (MTRPRGPAPRDGAAWRRDPARRVLLRDAVRGREGGLRLACAVMAGLIVSGGVACA) form the signal peptide. TPR repeat units lie at residues 97–130 (LELL…EPDN), 270–303 (LDGL…EPIT), 339–372 (AAND…DPHD), 374–406 (DALG…GPDA), 458–491 (LTVL…APRD), 493–525 (GALF…APAM), 528–561 (RLEA…DPDD), 754–787 (IGLA…HPDS), and 788–821 (VEAH…KPAN).

Belongs to the AcsC/BcsC family.

Its subcellular location is the cell outer membrane. It participates in glycan metabolism; bacterial cellulose biosynthesis. Required for maximal bacterial cellulose synthesis. This Komagataeibacter xylinus (Gluconacetobacter xylinus) protein is Cellulose synthase 2 operon protein C (bcsCII).